The following is a 338-amino-acid chain: LINE-1 retrotransposable element ORF1 protein (338 aa).

Positions 1 to 40 (MGKKQNRKTGNSKTQSASPPPKERSSSPATEQSWMENDFD) are disordered. Composition is skewed to polar residues over residues 8–17 (KTGNSKTQSA) and 26–35 (SSPATEQSWM). The stretch at 49–153 (RSNYSELRED…QSLQEIWDYV (105 aa)) forms a coiled coil. The interval 157-252 (NLRLIGVPES…KGKPIRLTAD (96 aa)) is RNA recognition motif (RRM) domain. A C-terminal domain (CTD) region spans residues 253–317 (LSAETLQARR…TTRPALKELL (65 aa)).

This sequence belongs to the transposase 22 family. As to quaternary structure, homotrimer (via coiled coil domain). May also form larger homooligomers. May interact with DDX39A, HNRNPA1, SERBP1 and YBX1. Interacts with TEX19 and UBR2. Interacts with MOV10. Interacts with APOBEC3D; this interaction inhibits LINE-1 retrotransposition. In terms of processing, polyubiquitinated, probably by UBR2, which induces its degradation.

The protein resides in the nucleus. The protein localises to the nucleolus. It localises to the cytoplasm. It is found in the cytoplasmic ribonucleoprotein granule. Its subcellular location is the stress granule. Functionally, nucleic acid-binding protein which is essential for retrotransposition of LINE-1 elements in the genome. Functions as a nucleic acid chaperone binding its own transcript and therefore preferentially mobilizing the transcript from which they are encoded. The chain is LINE-1 retrotransposable element ORF1 protein (L1RE1) from Homo sapiens (Human).